Reading from the N-terminus, the 635-residue chain is Phosphomethylpyrimidine synthase (635 aa).

Positions 1–14 are enriched in polar residues; the sequence is MNATVSSAVQSSLP. Residues 1 to 41 form a disordered region; the sequence is MNATVSSAVQSSLPFSGKTAQVDEGTVKPLPRSQKTYLSGS. Substrate is bound by residues N240, M269, Y298, H334, 354-356, 395-398, and E434; these read SRG and DGLR. H438 lines the Zn(2+) pocket. Substrate is bound at residue Y461. H502 provides a ligand contact to Zn(2+). [4Fe-4S] cluster contacts are provided by C582, C585, and C590.

Belongs to the ThiC family. In terms of assembly, homodimer. [4Fe-4S] cluster is required as a cofactor.

The catalysed reaction is 5-amino-1-(5-phospho-beta-D-ribosyl)imidazole + S-adenosyl-L-methionine = 4-amino-2-methyl-5-(phosphooxymethyl)pyrimidine + CO + 5'-deoxyadenosine + formate + L-methionine + 3 H(+). It functions in the pathway cofactor biosynthesis; thiamine diphosphate biosynthesis. Functionally, catalyzes the synthesis of the hydroxymethylpyrimidine phosphate (HMP-P) moiety of thiamine from aminoimidazole ribotide (AIR) in a radical S-adenosyl-L-methionine (SAM)-dependent reaction. In Nitrosospira multiformis (strain ATCC 25196 / NCIMB 11849 / C 71), this protein is Phosphomethylpyrimidine synthase.